The chain runs to 376 residues: Probable tRNA sulfurtransferase (376 aa).

Residues 51–152 (EENLKNLKYV…KNSVYVFDKS (102 aa)) form the THUMP domain. Residues 170 to 171 (LI), 195 to 196 (TF), Arg-252, Gly-274, and Gln-283 contribute to the ATP site.

The protein belongs to the ThiI family.

Its subcellular location is the cytoplasm. The enzyme catalyses [ThiI sulfur-carrier protein]-S-sulfanyl-L-cysteine + a uridine in tRNA + 2 reduced [2Fe-2S]-[ferredoxin] + ATP + H(+) = [ThiI sulfur-carrier protein]-L-cysteine + a 4-thiouridine in tRNA + 2 oxidized [2Fe-2S]-[ferredoxin] + AMP + diphosphate. It catalyses the reaction [ThiS sulfur-carrier protein]-C-terminal Gly-Gly-AMP + S-sulfanyl-L-cysteinyl-[cysteine desulfurase] + AH2 = [ThiS sulfur-carrier protein]-C-terminal-Gly-aminoethanethioate + L-cysteinyl-[cysteine desulfurase] + A + AMP + 2 H(+). It participates in cofactor biosynthesis; thiamine diphosphate biosynthesis. In terms of biological role, catalyzes the ATP-dependent transfer of a sulfur to tRNA to produce 4-thiouridine in position 8 of tRNAs, which functions as a near-UV photosensor. Also catalyzes the transfer of sulfur to the sulfur carrier protein ThiS, forming ThiS-thiocarboxylate. This is a step in the synthesis of thiazole, in the thiamine biosynthesis pathway. The sulfur is donated as persulfide by IscS. This is Probable tRNA sulfurtransferase from Mycoplasmopsis synoviae (strain 53) (Mycoplasma synoviae).